The primary structure comprises 304 residues: Trypsin-3 (304 aa).

The Peptidase S1 domain maps to 81-301 (IVGGYTCEEN…YVDWIKDTIA (221 aa)). Intrachain disulfides connect Cys87–Cys217, Cys105–Cys121, Cys196–Cys263, Cys228–Cys242, and Cys253–Cys277. His120 serves as the catalytic Charge relay system. Ca(2+) is bound by residues Glu132, Asn134, Val137, Glu139, and Glu142. The active-site Charge relay system is Asp164. Tyr211 bears the Sulfotyrosine mark. Ser257 (charge relay system) is an active-site residue.

This sequence belongs to the peptidase S1 family. It depends on Ca(2+) as a cofactor. As to expression, detected in pancreas and pancreatic fluid (at protein level). Expressed in pancreas and brain. Detected in ileum.

The protein localises to the secreted. It catalyses the reaction Preferential cleavage: Arg-|-Xaa, Lys-|-Xaa.. Not inhibited by Kunitz-type trypsin inhibitors. In terms of biological role, digestive protease that cleaves proteins preferentially after an Arg residue and has proteolytic activity toward Kunitz-type trypsin inhibitors. This Homo sapiens (Human) protein is Trypsin-3 (PRSS3).